The sequence spans 215 residues: FMN-dependent NADH:quinone oxidoreductase (215 aa).

Residue 17–19 coordinates FMN; it reads SAS.

It belongs to the azoreductase type 1 family. As to quaternary structure, homodimer. Requires FMN as cofactor.

The enzyme catalyses 2 a quinone + NADH + H(+) = 2 a 1,4-benzosemiquinone + NAD(+). The catalysed reaction is N,N-dimethyl-1,4-phenylenediamine + anthranilate + 2 NAD(+) = 2-(4-dimethylaminophenyl)diazenylbenzoate + 2 NADH + 2 H(+). Its function is as follows. Quinone reductase that provides resistance to thiol-specific stress caused by electrophilic quinones. Also exhibits azoreductase activity. Catalyzes the reductive cleavage of the azo bond in aromatic azo compounds to the corresponding amines. The protein is FMN-dependent NADH:quinone oxidoreductase of Clostridium botulinum (strain Alaska E43 / Type E3).